The chain runs to 618 residues: DNA mismatch repair protein MutL (618 aa).

The span at 348-359 (QTDTARSPTGNF) shows a compositional bias: polar residues. The disordered stretch occupies residues 348–400 (QTDTARSPTGNFESGEVFDYPKSQLQPSHSVSSGGASLGSRSAGGSGGAYRAT). Low complexity predominate over residues 377–388 (SVSSGGASLGSR).

The protein belongs to the DNA mismatch repair MutL/HexB family.

This protein is involved in the repair of mismatches in DNA. It is required for dam-dependent methyl-directed DNA mismatch repair. May act as a 'molecular matchmaker', a protein that promotes the formation of a stable complex between two or more DNA-binding proteins in an ATP-dependent manner without itself being part of a final effector complex. The chain is DNA mismatch repair protein MutL from Pseudoalteromonas translucida (strain TAC 125).